A 295-amino-acid chain; its full sequence is Pyridoxal 5'-phosphate synthase subunit PdxS (295 aa).

A D-ribose 5-phosphate-binding site is contributed by Asp25. Lys82 serves as the catalytic Schiff-base intermediate with D-ribose 5-phosphate. Gly154 is a D-ribose 5-phosphate binding site. Arg166 contributes to the D-glyceraldehyde 3-phosphate binding site. Residues Gly215 and 236 to 237 (GS) contribute to the D-ribose 5-phosphate site.

The protein belongs to the PdxS/SNZ family. In terms of assembly, in the presence of PdxT, forms a dodecamer of heterodimers.

It catalyses the reaction aldehydo-D-ribose 5-phosphate + D-glyceraldehyde 3-phosphate + L-glutamine = pyridoxal 5'-phosphate + L-glutamate + phosphate + 3 H2O + H(+). Its pathway is cofactor biosynthesis; pyridoxal 5'-phosphate biosynthesis. In terms of biological role, catalyzes the formation of pyridoxal 5'-phosphate from ribose 5-phosphate (RBP), glyceraldehyde 3-phosphate (G3P) and ammonia. The ammonia is provided by the PdxT subunit. Can also use ribulose 5-phosphate and dihydroxyacetone phosphate as substrates, resulting from enzyme-catalyzed isomerization of RBP and G3P, respectively. In Actinobacillus pleuropneumoniae serotype 7 (strain AP76), this protein is Pyridoxal 5'-phosphate synthase subunit PdxS.